Here is a 343-residue protein sequence, read N- to C-terminus: Membrane progestin receptor delta (343 aa).

At 1–49 (MLSLKMPQLLRVHQVPRVFWEEGIMSGYRCPTSSALDCVLSSFQMTNET) the chain is on the cytoplasmic side. Residues 50–70 (VNIWTHFLPTWYFLWRLLALG) traverse the membrane as a helical segment. Topologically, residues 71-79 (SPGFRADPY) are extracellular. Residues 80–100 (HLPLLVFLLPACLYPFASCCA) form a helical membrane-spanning segment. Residues 101–112 (HTFSSMSPRARH) are Cytoplasmic-facing. The helical transmembrane segment at 113–133 (ICYFLDYGALSLYSLGCAFPY) threads the bilayer. Residues 134-146 (AAYSMPASWLHSR) are Extracellular-facing. The helical transmembrane segment at 147 to 167 (LHQLFVPAAALNSFLCTGLSC) threads the bilayer. Residues 168-216 (YSRFPELEYPGFSKALRTAAFAYPFLFDNLPLFYRLRLCWGGAHSCGRD) are Cytoplasmic-facing. The helical transmembrane segment at 217-237 (ALSSNHGYHLLCALLSGFLFA) threads the bilayer. Residues 238 to 257 (ARLPERLAPGRFDYIGHSHQ) are Extracellular-facing. A helical membrane pass occupies residues 258–278 (LFHICAVLGTHFQLEAVLADM). The Cytoplasmic segment spans residues 279-291 (GSRRAWLAVQEPT). Residues 292 to 312 (LGLGATVATLSLAVIGNLFII) traverse the membrane as a helical segment. At 313 to 343 (AAFTASLLRMPGPCPLLQGSPLEEGLQAKQQ) the chain is on the extracellular side.

Belongs to the ADIPOR family. As to quaternary structure, homodimer.

It localises to the cell membrane. Functionally, plasma membrane progesterone (P4) receptor coupled to G proteins. Seems to act through a G(s) mediated pathway. Involved in neurosteroid inhibition of apoptosis. May be involved in regulating rapid P4 signaling in the nervous system. Also binds dehydroepiandrosterone (DHEA), pregnanolone, pregnenolone and allopregnanolone. The chain is Membrane progestin receptor delta from Mus musculus (Mouse).